We begin with the raw amino-acid sequence, 253 residues long: 20 kDa chaperonin, chloroplastic (253 aa).

The N-terminal 50 residues, 1-50, are a transit peptide targeting the chloroplast; that stretch reads MAATQLTASPVTMSARSLASLDGLRASSVKFSSLKPGTLRQSQFRRLVVK. 2 cpn-10 domain regions span residues 60 to 153 and 159 to 252; these read TSIK…GILE and DLKP…MAIL. Threonine 212 carries the phosphothreonine modification.

Belongs to the GroES chaperonin family. As to quaternary structure, homotetramer. Forms stable complexes with CPN60 in the presence of ATP. Interacts with FSD1. Interacts with CLPT1 and CLPT2. Interacts with CHLH. Interacts with SPY. Ubiquitous. Most abundant in leaves and inflorescence. Low levels found in roots.

It localises to the plastid. It is found in the chloroplast. Seems to function only as a co-chaperone, along with CPN60, and in certain cases is essential for the discharge of biologically active proteins from CPN60. Required to activate the iron superoxide dismutases (FeSOD). Its function is as follows. Involved in abscisic acid (ABA) signaling, independently of its co-chaperone role. Acts as a negative regulator of the CHLH-WRKY40 coupled ABA signaling pathway, downstream of CHLH and upstream of WRKY40. In Arabidopsis thaliana (Mouse-ear cress), this protein is 20 kDa chaperonin, chloroplastic (CPN20).